Here is a 314-residue protein sequence, read N- to C-terminus: Ribonuclease Z (314 aa).

His61, His63, Asp65, His66, His137, Asp207, and His263 together coordinate Zn(2+). Residue Asp65 is the Proton acceptor of the active site.

The protein belongs to the RNase Z family. In terms of assembly, homodimer. The cofactor is Zn(2+).

The enzyme catalyses Endonucleolytic cleavage of RNA, removing extra 3' nucleotides from tRNA precursor, generating 3' termini of tRNAs. A 3'-hydroxy group is left at the tRNA terminus and a 5'-phosphoryl group is left at the trailer molecule.. Its function is as follows. Zinc phosphodiesterase, which displays some tRNA 3'-processing endonuclease activity. Probably involved in tRNA maturation, by removing a 3'-trailer from precursor tRNA. The sequence is that of Ribonuclease Z from Thermococcus gammatolerans (strain DSM 15229 / JCM 11827 / EJ3).